Consider the following 310-residue polypeptide: tRNA dimethylallyltransferase (310 aa).

10–17 (GPTAVGKS) provides a ligand contact to ATP. 12 to 17 (TAVGKS) is a substrate binding site. Interaction with substrate tRNA regions lie at residues 35–38 (DSAQ), 159–163 (QRIQR), and 274–281 (KRQITWLR).

It belongs to the IPP transferase family. Monomer. It depends on Mg(2+) as a cofactor.

The catalysed reaction is adenosine(37) in tRNA + dimethylallyl diphosphate = N(6)-dimethylallyladenosine(37) in tRNA + diphosphate. Functionally, catalyzes the transfer of a dimethylallyl group onto the adenine at position 37 in tRNAs that read codons beginning with uridine, leading to the formation of N6-(dimethylallyl)adenosine (i(6)A). The sequence is that of tRNA dimethylallyltransferase from Halorhodospira halophila (strain DSM 244 / SL1) (Ectothiorhodospira halophila (strain DSM 244 / SL1)).